A 161-amino-acid polypeptide reads, in one-letter code: Large ribosomal subunit protein uL11 (161 aa).

It belongs to the universal ribosomal protein uL11 family. In terms of assembly, part of the ribosomal stalk of the 50S ribosomal subunit. Interacts with L10 and the large rRNA to form the base of the stalk. L10 forms an elongated spine to which L12 dimers bind in a sequential fashion forming a multimeric L10(L12)X complex.

Functionally, forms part of the ribosomal stalk which helps the ribosome interact with GTP-bound translation factors. This chain is Large ribosomal subunit protein uL11, found in Methanococcoides burtonii (strain DSM 6242 / NBRC 107633 / OCM 468 / ACE-M).